Here is a 230-residue protein sequence, read N- to C-terminus: Ion-translocating oxidoreductase complex subunit E (230 aa).

5 helical membrane passes run 39–59 (LGLG…VSLV), 69–89 (IPVF…LMNA), 93–113 (GLYL…IIIG), 124–144 (VLPA…VLVV), and 182–202 (AFLL…LIAA).

Belongs to the NqrDE/RnfAE family. The complex is composed of six subunits: RnfA, RnfB, RnfC, RnfD, RnfE and RnfG.

Its subcellular location is the cell inner membrane. Part of a membrane-bound complex that couples electron transfer with translocation of ions across the membrane. The chain is Ion-translocating oxidoreductase complex subunit E from Vibrio cholerae serotype O1 (strain ATCC 39315 / El Tor Inaba N16961).